The primary structure comprises 232 residues: Ornithine carbamoyltransferase (232 aa).

Residues Q15, R39, and 66–69 (HPTQ) contribute to the carbamoyl phosphate site. Residues N99, D163, and 167–168 (SM) each bind L-ornithine. Carbamoyl phosphate-binding positions include 204 to 207 (HCLP) and T232.

It belongs to the aspartate/ornithine carbamoyltransferase superfamily. OTCase family.

It is found in the cytoplasm. The enzyme catalyses carbamoyl phosphate + L-ornithine = L-citrulline + phosphate + H(+). The protein operates within amino-acid biosynthesis; L-arginine biosynthesis; L-arginine from L-ornithine and carbamoyl phosphate: step 1/3. Functionally, reversibly catalyzes the transfer of the carbamoyl group from carbamoyl phosphate (CP) to the N(epsilon) atom of ornithine (ORN) to produce L-citrulline. This is Ornithine carbamoyltransferase (argF) from Neisseria subflava.